The primary structure comprises 270 residues: 4-diphosphocytidyl-2-C-methyl-D-erythritol kinase (270 aa).

Residue Lys8 is part of the active site. An ATP-binding site is contributed by 90 to 100 (PIGAGLGGGSS). Asp132 is an active-site residue.

The protein belongs to the GHMP kinase family. IspE subfamily.

It catalyses the reaction 4-CDP-2-C-methyl-D-erythritol + ATP = 4-CDP-2-C-methyl-D-erythritol 2-phosphate + ADP + H(+). The protein operates within isoprenoid biosynthesis; isopentenyl diphosphate biosynthesis via DXP pathway; isopentenyl diphosphate from 1-deoxy-D-xylulose 5-phosphate: step 3/6. Its function is as follows. Catalyzes the phosphorylation of the position 2 hydroxy group of 4-diphosphocytidyl-2C-methyl-D-erythritol. This Cytophaga hutchinsonii (strain ATCC 33406 / DSM 1761 / CIP 103989 / NBRC 15051 / NCIMB 9469 / D465) protein is 4-diphosphocytidyl-2-C-methyl-D-erythritol kinase.